We begin with the raw amino-acid sequence, 314 residues long: Probable tRNA pseudouridine synthase B (314 aa).

The span at 1–10 (MATRGRHRSR) shows a compositional bias: basic residues. Residues 1–30 (MATRGRHRSRTSGTSSEPMTLRAPPDERDL) form a disordered region. Catalysis depends on Asp-72, which acts as the Nucleophile. The region spanning 237–314 (LPRVTIAPSA…LVVELDRMLV (78 aa)) is the PUA domain.

This sequence belongs to the pseudouridine synthase TruB family. Type 2 subfamily.

The catalysed reaction is uridine(55) in tRNA = pseudouridine(55) in tRNA. Functionally, could be responsible for synthesis of pseudouridine from uracil-55 in the psi GC loop of transfer RNAs. This Haloarcula marismortui (strain ATCC 43049 / DSM 3752 / JCM 8966 / VKM B-1809) (Halobacterium marismortui) protein is Probable tRNA pseudouridine synthase B.